The primary structure comprises 380 residues: Queuine tRNA-ribosyltransferase (380 aa).

Catalysis depends on D95, which acts as the Proton acceptor. Substrate-binding positions include 95–99, D149, Q192, and G219; that span reads DSGGF. Positions 250–256 are RNA binding; it reads GVGSPDS. Residue D269 is the Nucleophile of the active site. Positions 274 to 278 are RNA binding; important for wobble base 34 recognition; the sequence is TRIGR. Zn(2+)-binding residues include C307, C309, C312, and H338.

Belongs to the queuine tRNA-ribosyltransferase family. Homodimer. Within each dimer, one monomer is responsible for RNA recognition and catalysis, while the other monomer binds to the replacement base PreQ1. It depends on Zn(2+) as a cofactor.

The enzyme catalyses 7-aminomethyl-7-carbaguanine + guanosine(34) in tRNA = 7-aminomethyl-7-carbaguanosine(34) in tRNA + guanine. Its pathway is tRNA modification; tRNA-queuosine biosynthesis. In terms of biological role, catalyzes the base-exchange of a guanine (G) residue with the queuine precursor 7-aminomethyl-7-deazaguanine (PreQ1) at position 34 (anticodon wobble position) in tRNAs with GU(N) anticodons (tRNA-Asp, -Asn, -His and -Tyr). Catalysis occurs through a double-displacement mechanism. The nucleophile active site attacks the C1' of nucleotide 34 to detach the guanine base from the RNA, forming a covalent enzyme-RNA intermediate. The proton acceptor active site deprotonates the incoming PreQ1, allowing a nucleophilic attack on the C1' of the ribose to form the product. After dissociation, two additional enzymatic reactions on the tRNA convert PreQ1 to queuine (Q), resulting in the hypermodified nucleoside queuosine (7-(((4,5-cis-dihydroxy-2-cyclopenten-1-yl)amino)methyl)-7-deazaguanosine). The polypeptide is Queuine tRNA-ribosyltransferase (Geobacillus kaustophilus (strain HTA426)).